The sequence spans 353 residues: Photosystem II protein D1 (353 aa).

N-acetylthreonine is present on T2. T2 is subject to Phosphothreonine. Transmembrane regions (helical) follow at residues 29–46, 118–133, and 142–156; these read YIGW…TATS, HFLL…EWEL, and WIAV…AATA. H118 serves as a coordination point for chlorophyll a. Y126 is a binding site for pheophytin a. Residues D170 and E189 each coordinate [CaMn4O5] cluster. A helical transmembrane segment spans residues 197-218; sequence FHMLGVAGVFGGSLFSAMHGSL. Chlorophyll a is bound at residue H198. A quinone-binding positions include H215 and 264–265; that span reads SF. H215 contacts Fe cation. Residue H272 participates in Fe cation binding. Residues 274–288 traverse the membrane as a helical segment; sequence FLAAWPVVGIWFTAL. [CaMn4O5] cluster contacts are provided by H332, E333, D342, and A344. The propeptide occupies 345–353; that stretch reads AVEAPSTNG.

It belongs to the reaction center PufL/M/PsbA/D family. In terms of assembly, PSII is composed of 1 copy each of membrane proteins PsbA, PsbB, PsbC, PsbD, PsbE, PsbF, PsbH, PsbI, PsbJ, PsbK, PsbL, PsbM, PsbT, PsbX, PsbY, PsbZ, Psb30/Ycf12, at least 3 peripheral proteins of the oxygen-evolving complex and a large number of cofactors. It forms dimeric complexes. The cofactor is The D1/D2 heterodimer binds P680, chlorophylls that are the primary electron donor of PSII, and subsequent electron acceptors. It shares a non-heme iron and each subunit binds pheophytin, quinone, additional chlorophylls, carotenoids and lipids. D1 provides most of the ligands for the Mn4-Ca-O5 cluster of the oxygen-evolving complex (OEC). There is also a Cl(-1) ion associated with D1 and D2, which is required for oxygen evolution. The PSII complex binds additional chlorophylls, carotenoids and specific lipids.. Post-translationally, tyr-161 forms a radical intermediate that is referred to as redox-active TyrZ, YZ or Y-Z. C-terminally processed by CTPA; processing is essential to allow assembly of the oxygen-evolving complex and thus photosynthetic growth.

The protein resides in the plastid. It is found in the chloroplast thylakoid membrane. The catalysed reaction is 2 a plastoquinone + 4 hnu + 2 H2O = 2 a plastoquinol + O2. Photosystem II (PSII) is a light-driven water:plastoquinone oxidoreductase that uses light energy to abstract electrons from H(2)O, generating O(2) and a proton gradient subsequently used for ATP formation. It consists of a core antenna complex that captures photons, and an electron transfer chain that converts photonic excitation into a charge separation. The D1/D2 (PsbA/PsbD) reaction center heterodimer binds P680, the primary electron donor of PSII as well as several subsequent electron acceptors. This chain is Photosystem II protein D1, found in Nymphaea alba (White water-lily).